The following is a 500-amino-acid chain: Lysine--tRNA ligase (500 aa).

Mg(2+) is bound by residues Glu410 and Glu417.

This sequence belongs to the class-II aminoacyl-tRNA synthetase family. As to quaternary structure, homodimer. The cofactor is Mg(2+).

The protein localises to the cytoplasm. It carries out the reaction tRNA(Lys) + L-lysine + ATP = L-lysyl-tRNA(Lys) + AMP + diphosphate. The chain is Lysine--tRNA ligase from Pseudomonas putida (strain ATCC 700007 / DSM 6899 / JCM 31910 / BCRC 17059 / LMG 24140 / F1).